The sequence spans 399 residues: Probable aspartate/prephenate aminotransferase (399 aa).

3 residues coordinate L-aspartate: Gly-39, Trp-125, and Asn-175. Lys-239 carries the post-translational modification N6-(pyridoxal phosphate)lysine. Residue Arg-375 coordinates L-aspartate.

Belongs to the class-I pyridoxal-phosphate-dependent aminotransferase family. As to quaternary structure, homodimer. Pyridoxal 5'-phosphate is required as a cofactor.

It is found in the cytoplasm. The enzyme catalyses L-aspartate + 2-oxoglutarate = oxaloacetate + L-glutamate. The catalysed reaction is L-arogenate + 2-oxoglutarate = prephenate + L-glutamate. Functionally, catalyzes the reversible conversion of aspartate and 2-oxoglutarate to glutamate and oxaloacetate. Can also transaminate prephenate in the presence of glutamate. In Rickettsia bellii (strain RML369-C), this protein is Probable aspartate/prephenate aminotransferase (aatA).